We begin with the raw amino-acid sequence, 209 residues long: Large ribosomal subunit protein uL3 (209 aa).

The span at 112 to 122 (GTTRGHGTQGN) shows a compositional bias: polar residues. Residues 112–146 (GTTRGHGTQGNIKRWGQSRGPETHGSRYHRIPGSM) form a disordered region.

It belongs to the universal ribosomal protein uL3 family. Part of the 50S ribosomal subunit. Forms a cluster with proteins L14 and L19.

One of the primary rRNA binding proteins, it binds directly near the 3'-end of the 23S rRNA, where it nucleates assembly of the 50S subunit. This chain is Large ribosomal subunit protein uL3, found in Lactobacillus johnsonii (strain CNCM I-12250 / La1 / NCC 533).